Reading from the N-terminus, the 150-residue chain is MLAQFDVNLVVLLVLLICGLLSQNAAVTIAAGILIVIKITPLNQFFPYIQAHGLNLGILILTIGVLTPIASGKLSGESILKSFISFKSLVAIAIGLLVAWLGGRGVKLMSSQPDVVAGLLIGTVAGVALLRGVPVGPLIAAGLLSLFIGK.

4 helical membrane-spanning segments follow: residues 22–42 (SQNAAVTIAAGILIVIKITPL), 45–65 (FFPYIQAHGLNLGILILTIGV), 83–103 (FISFKSLVAIAIGLLVAWLGG), and 115–135 (VVAGLLIGTVAGVALLRGVPV).

This sequence belongs to the UPF0756 family.

It is found in the cell membrane. This chain is UPF0756 membrane protein A1S_2121, found in Acinetobacter baumannii (strain ATCC 17978 / DSM 105126 / CIP 53.77 / LMG 1025 / NCDC KC755 / 5377).